The chain runs to 79 residues: Morintide mO1 (79 aa).

An N-terminal signal peptide occupies residues 1 to 20; the sequence is MAKLSFLSLFLLCLVATATA. The Chitin-binding type-1 domain maps to 21–63; that stretch reads QNCGRQAGNRACANQLCCSQYGFCGSTSEYCSRANGCQSNCRG. 4 disulfide bridges follow: Cys23/Cys38, Cys32/Cys44, Cys37/Cys51, and Cys57/Cys61. The propeptide occupies 64–79; it reads GGGADGAGGEAGGGGP.

In terms of tissue distribution, leaves (at protein level).

Functionally, chitin-binding protein which functions in defense against chitin-containing fungal pathogens. Inhibits the growth of budding hyphae in A.alternata and A.brassiciola. The chain is Morintide mO1 from Moringa oleifera (Horseradish tree).